The sequence spans 459 residues: tRNA modification GTPase MnmE (459 aa).

R22, E85, and R124 together coordinate (6S)-5-formyl-5,6,7,8-tetrahydrofolate. Positions 221-380 (GLSTVIVGKP…LEIQIRDLFF (160 aa)) constitute a TrmE-type G domain. K(+) is bound at residue N231. GTP contacts are provided by residues 231–236 (NVGKSS), 250–256 (TEVAGTT), and 275–278 (DTAG). A Mg(2+)-binding site is contributed by S235. Residues T250, V252, and T255 each coordinate K(+). T256 is a Mg(2+) binding site. Residue K459 coordinates (6S)-5-formyl-5,6,7,8-tetrahydrofolate.

Belongs to the TRAFAC class TrmE-Era-EngA-EngB-Septin-like GTPase superfamily. TrmE GTPase family. As to quaternary structure, homodimer. Heterotetramer of two MnmE and two MnmG subunits. It depends on K(+) as a cofactor.

It is found in the cytoplasm. Its function is as follows. Exhibits a very high intrinsic GTPase hydrolysis rate. Involved in the addition of a carboxymethylaminomethyl (cmnm) group at the wobble position (U34) of certain tRNAs, forming tRNA-cmnm(5)s(2)U34. The polypeptide is tRNA modification GTPase MnmE (Staphylococcus aureus (strain bovine RF122 / ET3-1)).